Here is a 319-residue protein sequence, read N- to C-terminus: Ankyrin repeat domain-containing protein 1 (319 aa).

Residues glutamate 63 to isoleucine 89 are a coiled coil. 5 ANK repeats span residues tyrosine 152–phenylalanine 181, leucine 185–alanine 214, leucine 218–alanine 247, glutamate 251–valine 280, and alanine 284–arginine 315.

As to quaternary structure, interacts with TTN/titin and YBX1. As to expression, expressed in heart. In postnatal neonatal heart, it is expressed in an asymmetrical way; left ventricle favored towards right ventricle. Whether or not this could be correlated with a hypertrophic heart is still a matter of debate. Levels increase gradually from newborn to adult.

It is found in the nucleus. In terms of biological role, may play an important role in endothelial cell activation. May act as a nuclear transcription factor that negatively regulates the expression of cardiac genes. The protein is Ankyrin repeat domain-containing protein 1 (ANKRD1) of Sus scrofa (Pig).